The primary structure comprises 346 residues: Hydroxyproline O-galactosyltransferase HPGT3 (346 aa).

The segment covering 1 to 10 has biased composition (polar residues); the sequence is MESLPTTVPS. The disordered stretch occupies residues 1–21; it reads MESLPTTVPSKSERRARSSKF. Residues 1 to 28 are Cytoplasmic-facing; the sequence is MESLPTTVPSKSERRARSSKFSQSSSKP. The helical; Signal-anchor for type II membrane protein transmembrane segment at 29 to 45 threads the bilayer; it reads SVIMAFFSCVAWLYVAG. The Lumenal portion of the chain corresponds to 46 to 346; that stretch reads RLWQDAENRV…IRQDKVCSVA (301 aa).

This sequence belongs to the glycosyltransferase 31 family. Requires Mn(2+) as cofactor. Expressed in roots, rosette leaves, cauline leaves, stems, flowers and siliques.

Its subcellular location is the golgi apparatus membrane. The protein operates within protein modification; protein glycosylation. Functionally, possesses hydroxyproline O-galactosyltransferase activity. Transfers galactose from UDP-galactose to hydroxyproline residues in the arabinogalactan proteins (AGPs). Is specific for AGPs containing non-contiguous peptidyl hydroxyproline residues. The addition of galactose onto the peptidyl hydroxyproline residues in AGP core proteins represents the first committed step in arabinogalactan polysaccharide addition. AGP glycans play essential roles in both vegetative and reproductive plant growth. In Arabidopsis thaliana (Mouse-ear cress), this protein is Hydroxyproline O-galactosyltransferase HPGT3.